The following is a 259-amino-acid chain: Trans-aconitate 2-methyltransferase (259 aa).

Belongs to the methyltransferase superfamily. Tam family.

It is found in the cytoplasm. The catalysed reaction is trans-aconitate + S-adenosyl-L-methionine = (E)-3-(methoxycarbonyl)pent-2-enedioate + S-adenosyl-L-homocysteine. Catalyzes the S-adenosylmethionine monomethyl esterification of trans-aconitate. This is Trans-aconitate 2-methyltransferase from Variovorax paradoxus (strain S110).